Consider the following 204-residue polypeptide: Urease accessory protein UreG (204 aa).

Position 12–19 (12–19) interacts with GTP; it reads GPVGSGKT.

It belongs to the SIMIBI class G3E GTPase family. UreG subfamily. As to quaternary structure, homodimer. UreD, UreF and UreG form a complex that acts as a GTP-hydrolysis-dependent molecular chaperone, activating the urease apoprotein by helping to assemble the nickel containing metallocenter of UreC. The UreE protein probably delivers the nickel.

The protein resides in the cytoplasm. Facilitates the functional incorporation of the urease nickel metallocenter. This process requires GTP hydrolysis, probably effectuated by UreG. The protein is Urease accessory protein UreG of Ectopseudomonas mendocina (strain ymp) (Pseudomonas mendocina).